The primary structure comprises 917 residues: Hexokinase-2 (917 aa).

Residue M1 is modified to N-acetylmethionine. Positions 1–16 (MIASHLLAYFFTELNH) are mitochondrial-binding peptide (MBP). 2 consecutive Hexokinase domains span residues 16 to 458 (HDQV…MVTA) and 464 to 906 (ADQH…LITA). ATP contacts are provided by residues R30 and 84–89 (DLGGTN). Residues 73–207 (DGTEHGEFLA…DFDIDIVAVV (135 aa)) form a hexokinase small subdomain 1 region. 84–88 (DLGGT) contacts D-glucose 6-phosphate. D-glucose is bound by residues 155 to 156 (SF), 172 to 173 (TK), and 208 to 209 (ND). Residues 208 to 447 (NDTVGTMMTC…CDVRFLRSED (240 aa)) form a hexokinase large subdomain 1 region. The D-glucose 6-phosphate site is built by D209 and T232. Residues N235, E260, and 291–294 (QLFE) each bind D-glucose. 413 to 415 (DGS) is a D-glucose 6-phosphate binding site. Residue 425–426 (KR) coordinates ATP. D-glucose 6-phosphate contacts are provided by residues S449 and 532 to 536 (DLGGT). Residues 521-655 (DGTEKGDFLA…EFDLDVVAVV (135 aa)) form a hexokinase small subdomain 2 region. Residue 532–537 (DLGGTN) participates in ATP binding. D-glucose contacts are provided by residues 603-604 (SF), 620-621 (TK), and 656-657 (ND). The interval 656–895 (NDTVGTMMTC…CDVSFLQSED (240 aa)) is hexokinase large subdomain 2. Positions 657 and 680 each coordinate D-glucose 6-phosphate. Residue T680 coordinates ATP. D-glucose is bound by residues 682 to 683 (SN), E708, and 739 to 742 (QRFE). Residues 747-748 (GM), 784-788 (TKFLS), and 863-867 (TLYKL) each bind ATP. Residues 861-863 (DGT) and S897 each bind D-glucose 6-phosphate.

The protein belongs to the hexokinase family. As to quaternary structure, monomer. Interacts with TIGAR; the interaction increases hexokinase activity in a hypoxia- and HIF1A-dependent manner. Predominant hexokinase isozyme expressed in insulin-responsive tissues such as skeletal muscle.

Its subcellular location is the mitochondrion outer membrane. It localises to the cytoplasm. The protein localises to the cytosol. It catalyses the reaction a D-hexose + ATP = a D-hexose 6-phosphate + ADP + H(+). The catalysed reaction is D-fructose + ATP = D-fructose 6-phosphate + ADP + H(+). It carries out the reaction D-glucose + ATP = D-glucose 6-phosphate + ADP + H(+). The protein operates within carbohydrate metabolism; hexose metabolism. It functions in the pathway carbohydrate degradation; glycolysis; D-glyceraldehyde 3-phosphate and glycerone phosphate from D-glucose: step 1/4. With respect to regulation, hexokinase activity is specifically inhibited by 2,6-disubstituted glucosamines. Functionally, catalyzes the phosphorylation of hexose, such as D-glucose and D-fructose, to hexose 6-phosphate (D-glucose 6-phosphate and D-fructose 6-phosphate, respectively). Mediates the initial step of glycolysis by catalyzing phosphorylation of D-glucose to D-glucose 6-phosphate. Plays a key role in maintaining the integrity of the outer mitochondrial membrane by preventing the release of apoptogenic molecules from the intermembrane space and subsequent apoptosis. The protein is Hexokinase-2 of Homo sapiens (Human).